The sequence spans 182 residues: uncharacterized protein (182 aa).

This sequence belongs to the mimivirus L6/L7/L57 family.

This is an uncharacterized protein from Acanthamoeba polyphaga mimivirus (APMV).